The chain runs to 98 residues: MSSYKYYDLIRKPIITEKTTTLSEQNKYAFYVDKFAEKLTVKKAIEEIFKVKVKKVNILNVKGKKKRFKGIIGTQINRKKAIVTLEKDHNIDFAGGIK.

This sequence belongs to the universal ribosomal protein uL23 family. In terms of assembly, part of the 50S ribosomal subunit. Contacts protein L29, and trigger factor when it is bound to the ribosome.

Its function is as follows. One of the early assembly proteins it binds 23S rRNA. One of the proteins that surrounds the polypeptide exit tunnel on the outside of the ribosome. Forms the main docking site for trigger factor binding to the ribosome. The chain is Large ribosomal subunit protein uL23 from Rickettsia felis (strain ATCC VR-1525 / URRWXCal2) (Rickettsia azadi).